The sequence spans 152 residues: Superoxide dismutase [Cu-Zn] (152 aa).

Cu cation-binding residues include histidine 45, histidine 47, and histidine 62. Positions proline 61–threonine 87 are disordered. Zn(2+) is bound by residues histidine 62, histidine 70, histidine 79, and aspartate 82. Positions glycine 67–glycine 81 are enriched in basic and acidic residues. Cu cation is bound at residue histidine 119.

Belongs to the Cu-Zn superoxide dismutase family. Homodimer. Cu cation is required as a cofactor. Zn(2+) serves as cofactor.

It is found in the cytoplasm. It carries out the reaction 2 superoxide + 2 H(+) = H2O2 + O2. Functionally, destroys radicals which are normally produced within the cells and which are toxic to biological systems. The chain is Superoxide dismutase [Cu-Zn] from Zingiber officinale (Ginger).